We begin with the raw amino-acid sequence, 796 residues long: Cadherin-11 (796 aa).

Positions 1–24 (MKENYCLQAALVCLSMLYHSQAFA) are cleaved as a signal peptide. The propeptide occupies 25-53 (LERRSHLHPSFHGHHEKGKEGQVLQRSKR). Cadherin domains are found at residues 54–159 (GWVW…PPEF), 160–268 (LHEI…PPKF), 269–383 (PQSV…PPMF), 384–486 (LAPS…DNAP), and 487–612 (KFAA…YILN). At 54-617 (GWVWNQFFVI…AYILNAGLST (564 aa)) the chain is on the extracellular side. Residues Asn-455 and Asn-540 are each glycosylated (N-linked (GlcNAc...) asparagine). The chain crosses the membrane as a helical span at residues 618–640 (GALIAILACIVILLVIVVLFVTL). Topologically, residues 641–796 (RRQKKEPLIV…GSKDTFDDDS (156 aa)) are cytoplasmic. Ser-788 bears the Phosphoserine mark. Phosphothreonine is present on Thr-791.

Interacts with PCDH8. As to expression, selectively expressed in osteoblastic cell lines, precursor cell lines of osteoblasts, and primary osteoblastic cells from calvaria, as well as in lung, testis, and brain tissues at low levels.

It is found in the cell membrane. Cadherins are calcium-dependent cell adhesion proteins. They preferentially interact with themselves in a homophilic manner in connecting cells; cadherins may thus contribute to the sorting of heterogeneous cell types. Required for proper focal adhesion assembly. Involved in the regulation of cell migration. The sequence is that of Cadherin-11 (Cdh11) from Mus musculus (Mouse).